The primary structure comprises 685 residues: UvrABC system protein B (685 aa).

The Helicase ATP-binding domain occupies 30 to 188 (DGVLRGDRWQ…QELVSLHYIR (159 aa)). Residue 43-50 (GVTGSGKT) coordinates ATP. Positions 96-119 (YYDFYQPEAYLPALDKYIAKDLRI) match the Beta-hairpin motif. The Helicase C-terminal domain maps to 435–597 (QIDDLLAEIR…ITPRSIRKSL (163 aa)). Positions 641-676 (YAMVAELRLEMNEAAIQMEYEKAAYLRDEIARLMHG) constitute a UVR domain.

It belongs to the UvrB family. As to quaternary structure, forms a heterotetramer with UvrA during the search for lesions. Interacts with UvrC in an incision complex.

The protein resides in the cytoplasm. In terms of biological role, the UvrABC repair system catalyzes the recognition and processing of DNA lesions. A damage recognition complex composed of 2 UvrA and 2 UvrB subunits scans DNA for abnormalities. Upon binding of the UvrA(2)B(2) complex to a putative damaged site, the DNA wraps around one UvrB monomer. DNA wrap is dependent on ATP binding by UvrB and probably causes local melting of the DNA helix, facilitating insertion of UvrB beta-hairpin between the DNA strands. Then UvrB probes one DNA strand for the presence of a lesion. If a lesion is found the UvrA subunits dissociate and the UvrB-DNA preincision complex is formed. This complex is subsequently bound by UvrC and the second UvrB is released. If no lesion is found, the DNA wraps around the other UvrB subunit that will check the other stand for damage. The chain is UvrABC system protein B from Chlorobium phaeobacteroides (strain DSM 266 / SMG 266 / 2430).